We begin with the raw amino-acid sequence, 469 residues long: Zinc transporter SLC39A7 (469 aa).

A helical membrane pass occupies residues 5-25; sequence LGAPHWVAVGLLTWAALGLLV. Basic and acidic residues-rich tracts occupy residues 43 to 56 and 66 to 114; these read HGHS…DFHH and HTHE…EHSH. Residues 43 to 122 are disordered; it reads HGHSHRRSHE…SHGGYGESGA (80 aa). Pros-methylhistidine is present on His66. The next 3 helical transmembrane spans lie at 138–158, 169–189, and 214–234; these read ALGA…LIPV, LQIL…LHLI, and GPIL…LVVE. Residues 242–255 show a composition bias toward basic residues; the sequence is GGHGHSHGHGHTHG. Residues 242 to 313 are disordered; the sequence is GGHGHSHGHG…QNSEEEKTGS (72 aa). Residues 256–266 show a composition bias toward low complexity; the sequence is HTQGSHGHGTQ. Phosphoserine occurs at positions 275 and 276. Over residues 295 to 313 the composition is skewed to basic and acidic residues; the sequence is RLKDGPLRPQNSEEEKTGS. A run of 3 helical transmembrane segments spans residues 386 to 406, 417 to 437, and 448 to 468; these read LTAI…GGAV, GWVL…SVLP, and SLLE…IAHL.

It belongs to the ZIP transporter (TC 2.A.5) family. KE4/Catsup subfamily. Homodimer. In terms of processing, methylation at some His residue by METTL9 leads to reduced zinc-binding. Rapidly phosphorylated by CK2 following Zn(2+) treatment. This phosphorylation is required for efficient cytosolic Zn(2+) release.

It is found in the endoplasmic reticulum membrane. The protein localises to the golgi apparatus. It localises to the cis-Golgi network membrane. It carries out the reaction Zn(2+)(in) = Zn(2+)(out). Transports Zn(2+) from the endoplasmic reticulum (ER)/Golgi apparatus to the cytosol, playing an essential role in the regulation of cytosolic zinc levels. Acts as a gatekeeper of zinc release from intracellular stores, requiring post-translational activation by phosphorylation, resulting in activation of multiple downstream pathways leading to cell growth and proliferation. Has an essential role in B cell development and is required for proper B cell receptor signaling. Plays an important role in maintaining intestinal epithelial homeostasis and skin dermis development by regulating ER function. Controls cell signaling pathways involved in glucose metabolism in skeletal muscle. Has a protective role against ER stress in different biological contexts. Mediates Zn(2+)-induced ferroptosis. The chain is Zinc transporter SLC39A7 from Canis lupus familiaris (Dog).